A 132-amino-acid polypeptide reads, in one-letter code: Fatty acid-binding protein, brain (132 aa).

Residue valine 2 is modified to N-acetylvaline. 127–129 (RHY) contributes to the a fatty acid binding site.

It belongs to the calycin superfamily. Fatty-acid binding protein (FABP) family.

Its subcellular location is the cytoplasm. In terms of biological role, FABPs are thought to play a role in the intracellular transport of long-chain fatty acids and their acyl-CoA esters. This is Fatty acid-binding protein, brain (FABP7) from Gallus gallus (Chicken).